The following is a 222-amino-acid chain: Glutathione S-transferase A6 (222 aa).

Positions 3 to 83 (EKPLFHYDEA…YFSSKYNLYG (81 aa)) constitute a GST N-terminal domain. Glutathione contacts are provided by residues Y9, R45, 54-55 (QV), and 67-68 (QT). Residues 85–208 (DMKERALIDM…QPGSQRQPPV (124 aa)) enclose the GST C-terminal domain.

Belongs to the GST superfamily. Alpha family. As to quaternary structure, homodimer or heterodimer of GSTA1 and GSTA2.

Its subcellular location is the cytoplasm. The enzyme catalyses RX + glutathione = an S-substituted glutathione + a halide anion + H(+). Functionally, conjugation of reduced glutathione to a wide number of exogenous and endogenous hydrophobic electrophiles. The chain is Glutathione S-transferase A6 (Gsta6) from Rattus norvegicus (Rat).